Reading from the N-terminus, the 1203-residue chain is DNA-directed RNA polymerase subunit beta' (1203 aa).

Zn(2+) contacts are provided by Cys-60, Cys-62, Cys-75, and Cys-78. Mg(2+) is bound by residues Asp-449, Asp-451, and Asp-453. 4 residues coordinate Zn(2+): Cys-818, Cys-892, Cys-899, and Cys-902.

It belongs to the RNA polymerase beta' chain family. The RNAP catalytic core consists of 2 alpha, 1 beta, 1 beta' and 1 omega subunit. When a sigma factor is associated with the core the holoenzyme is formed, which can initiate transcription. Mg(2+) serves as cofactor. Zn(2+) is required as a cofactor.

It carries out the reaction RNA(n) + a ribonucleoside 5'-triphosphate = RNA(n+1) + diphosphate. Functionally, DNA-dependent RNA polymerase catalyzes the transcription of DNA into RNA using the four ribonucleoside triphosphates as substrates. The chain is DNA-directed RNA polymerase subunit beta' from Bacillus thuringiensis (strain Al Hakam).